A 713-amino-acid chain; its full sequence is Protein-glucosylgalactosylhydroxylysine glucosidase (713 aa).

An N-terminal signal peptide occupies residues 1 to 21; the sequence is MIINSQEYLQPPQWWNERVEA. 5 N-linked (GlcNAc...) asparagine glycosylation sites follow: Asn-104, Asn-160, Asn-171, Asn-186, and Asn-283. A substrate-binding site is contributed by 317–318; that stretch reads WD. Asn-361 carries an N-linked (GlcNAc...) asparagine glycan. The active-site Proton donor is Glu-451. N-linked (GlcNAc...) asparagine glycans are attached at residues Asn-457 and Asn-481. Substrate is bound at residue 521–522; it reads KQ. Asn-535, Asn-576, and Asn-662 each carry an N-linked (GlcNAc...) asparagine glycan.

The protein belongs to the glycosyl hydrolase 65 family.

The protein resides in the secreted. The catalysed reaction is (5R)-5-O-[alpha-D-glucosyl-(1-&gt;2)-beta-D-galactosyl]-5-hydroxy-L-lysyl-[collagen] + H2O = (5R)-5-O-(beta-D-galactosyl)-5-hydroxy-L-lysyl-[collagen] + D-glucose. In terms of biological role, catalyzes the hydrolysis of glucose from the disaccharide unit linked to hydroxylysine residues of collagen and collagen-like proteins. The chain is Protein-glucosylgalactosylhydroxylysine glucosidase from Dictyostelium discoideum (Social amoeba).